We begin with the raw amino-acid sequence, 513 residues long: Cytochrome P450 71D445 (513 aa).

Residues 12–28 (SEWAITSTITLLFLILL) traverse the membrane as a helical; Signal-anchor for type II membrane protein segment. Position 450 (C450) interacts with heme.

Belongs to the cytochrome P450 family. Heme is required as a cofactor. As to expression, expressed in mature seeds.

The protein localises to the membrane. The enzyme catalyses (-)-casbene + reduced [NADPH--hemoprotein reductase] + O2 = 8-hydroxycasbene + oxidized [NADPH--hemoprotein reductase] + H2O + H(+). It catalyses the reaction 4-hydroxycasbene + reduced [NADPH--hemoprotein reductase] + O2 = 4,8-dihydroxycasbene + oxidized [NADPH--hemoprotein reductase] + H2O + H(+). The catalysed reaction is 4,8-dihydroxycasbene + reduced [NADPH--hemoprotein reductase] + O2 = 4,5,8-trihydroxycasbene + oxidized [NADPH--hemoprotein reductase] + H2O + H(+). Its pathway is secondary metabolite biosynthesis; terpenoid biosynthesis. Its function is as follows. Involved in the biosynthesis of macrocyclic lathyrane type diterpenoids (also called Euphorbia factors) natural products, including the cyclization route from casbene to jolkinol C, a precursor for ingenol mebutate that is used to treat actinic keratosis, a precancerous skin condition. Catalyzes the hydroxylation of (-)-casbene and 4-hydroxycasbene to produce 8-hydroxycasbene and 4,8-dihydroxycasbene, respectively. Also mediates the formation of 4-hydroxy-8-ketocasbene from 4,8-dihydroxycasbene. Together with ADH1, triggers the biosynthesis of 8-ketocasbene from 8-hydroxycasbene. This Euphorbia lathyris (Caper spurge) protein is Cytochrome P450 71D445.